The chain runs to 238 residues: Large ribosomal subunit protein bL17m (238 aa).

This sequence belongs to the bacterial ribosomal protein bL17 family. In terms of assembly, component of the mitochondrial large ribosomal subunit (mt-LSU). Mature yeast 74S mitochondrial ribosomes consist of a small (37S) and a large (54S) subunit. The 37S small subunit contains a 15S ribosomal RNA (15S mt-rRNA) and 34 different proteins. The 54S large subunit contains a 21S rRNA (21S mt-rRNA) and 46 different proteins.

The protein localises to the mitochondrion. Component of the mitochondrial ribosome (mitoribosome), a dedicated translation machinery responsible for the synthesis of mitochondrial genome-encoded proteins, including at least some of the essential transmembrane subunits of the mitochondrial respiratory chain. The mitoribosomes are attached to the mitochondrial inner membrane and translation products are cotranslationally integrated into the membrane. The chain is Large ribosomal subunit protein bL17m (MRPL8) from Saccharomyces cerevisiae (strain ATCC 204508 / S288c) (Baker's yeast).